The primary structure comprises 563 residues: Coiled-coil domain-containing protein 63 (563 aa).

The segment at 1–29 (MSVLKKNRRKDSDTPQEPSEKAKEQQAEA) is disordered. Positions 10-29 (KDSDTPQEPSEKAKEQQAEA) are enriched in basic and acidic residues. Coiled-coil stretches lie at residues 18 to 201 (PSEK…QLQH), 233 to 291 (AMKD…AKKH), and 341 to 422 (TELN…KKIN).

In terms of biological role, plays a role in spermiogenesis. Involved in the elongation of flagella and the formation of sperm heads. This is Coiled-coil domain-containing protein 63 from Homo sapiens (Human).